The primary structure comprises 318 residues: Myoblast determination protein 1 (318 aa).

Met1 is covalently cross-linked (Peptide (Met-Gly) (interchain with G-Cter in ubiquitin)). Lys104 is modified (N6-methyllysine; by EHMT2). Residues 109–160 form the bHLH domain; the sequence is DRRKAATMRERRRLSKVNEAFETLKRCTSSNPNQRLPKVEILRNAIRYIEGL. 2 disordered regions span residues 175–224 and 262–318; these read AAFY…RQNG and SPAA…YQVL. A compositionally biased stretch (polar residues) spans 196–206; the sequence is SDASSPRSNCS. Positions 262–271 are enriched in low complexity; that stretch reads SPAAPSLLLP. A compositionally biased stretch (pro residues) spans 272 to 282; it reads DAPPESPPGPP. The span at 290-304 shows a compositional bias: polar residues; the sequence is AEQGTQTPSPDSTPQ.

In terms of assembly, efficient DNA binding requires dimerization with another bHLH protein. Seems to form active heterodimers with ITF-2. Interacts with SUV39H1. Interacts with DDX5. Interacts with CHD2. Interacts with TSC22D3. Interacts with SETD3. Interacts with P-TEFB complex; promotes the transcriptional activity of MYOD1 through its CDK9-mediated phosphorylation. Interacts with CSRP3. Interacts with NUPR1. Phosphorylated by CDK9. This phosphorylation promotes its function in muscle differentiation. Post-translationally, acetylated by a complex containing EP300 and PCAF. The acetylation is essential to activate target genes. Conversely, its deacetylation by SIRT1 inhibits its function. In terms of processing, ubiquitinated on the N-terminus; which is required for proteasomal degradation. Methylation at Lys-104 by EHMT2/G9a inhibits myogenic activity.

It localises to the nucleus. In terms of biological role, acts as a transcriptional activator that promotes transcription of muscle-specific target genes and plays a role in muscle differentiation. Together with MYF5 and MYOG, co-occupies muscle-specific gene promoter core region during myogenesis. Induces fibroblasts to differentiate into myoblasts. Interacts with and is inhibited by the twist protein. This interaction probably involves the basic domains of both proteins. The sequence is that of Myoblast determination protein 1 (Myod1) from Rattus norvegicus (Rat).